We begin with the raw amino-acid sequence, 440 residues long: Transposon Ty1-BR Gag polyprotein (440 aa).

Composition is skewed to polar residues over residues 1–10, 48–60, and 127–152; these read MESQQLSNYP, TKAN…TPAS, and QSQF…GNTF. 3 disordered regions span residues 1 to 93, 126 to 173, and 352 to 440; these read MESQ…MMTQ, PQSQ…RPPP, and GSRN…PETY. A compositionally biased stretch (low complexity) spans 153 to 165; that stretch reads TDSSSADSDMTST. The RNA-binding stretch occupies residues 299 to 401; that stretch reads NNGIHINNKV…NSKSKTARAH (103 aa). Residues 402–418 are compositionally biased toward low complexity; sequence NVSTSNNSPSTDNDSIS. Ser-416 bears the Phosphoserine mark. Residues 419-428 show a composition bias toward polar residues; it reads KSTTEPIQLN. Over residues 429 to 440 the composition is skewed to basic and acidic residues; the sequence is NKHDLHLRPETY.

As to quaternary structure, homotrimer.

It localises to the cytoplasm. Functionally, capsid protein (CA) is the structural component of the virus-like particle (VLP), forming the shell that encapsulates the retrotransposons dimeric RNA genome. The particles are assembled from trimer-clustered units and there are holes in the capsid shells that allow for the diffusion of macromolecules. CA also has nucleocapsid-like chaperone activity, promoting primer tRNA(i)-Met annealing to the multipartite primer-binding site (PBS), dimerization of Ty1 RNA and initiation of reverse transcription. The sequence is that of Transposon Ty1-BR Gag polyprotein (TY1A-BR) from Saccharomyces cerevisiae (strain ATCC 204508 / S288c) (Baker's yeast).